The following is a 242-amino-acid chain: uncharacterized protein (242 aa).

Transmembrane regions (helical) follow at residues 75 to 95, 116 to 136, and 176 to 196; these read YAIF…HNFY, IVLI…FSLI, and IQGL…LEVI. A disordered region spans residues 204 to 242; that stretch reads DVEMSSMRGQAITTEPASDNTMAEGTDCNTSKDVESGSS. Residues 210–232 are compositionally biased toward polar residues; that stretch reads MRGQAITTEPASDNTMAEGTDCN. A compositionally biased stretch (basic and acidic residues) spans 233–242; it reads TSKDVESGSS.

It is found in the cytoplasm. Its subcellular location is the membrane. This is an uncharacterized protein from Schizosaccharomyces pombe (strain 972 / ATCC 24843) (Fission yeast).